A 108-amino-acid polypeptide reads, in one-letter code: DIQMTQTTSSLSASLGDRVTISCRASQDISNYLNWYQQKPDGTVKLLIYYTSRLHSGVPSRFSGSGSGTDYSLTISNLEQEDIATYFCQQGNSLPRTFGGGTKLEIKR.

Residues 1 to 23 (DIQMTQTTSSLSASLGDRVTISC) are framework-1. The cysteines at positions 23 and 88 are disulfide-linked. Residues 24–34 (RASQDISNYLN) form a complementarity-determining-1 region. The segment at 35–49 (WYQQKPDGTVKLLIY) is framework-2. Residues 50–56 (YTSRLHS) are complementarity-determining-2. Residues 57–88 (GVPSRFSGSGSGTDYSLTISNLEQEDIATYFC) are framework-3. The interval 89–97 (QQGNSLPRT) is complementarity-determining-3. The segment at 98-108 (FGGGTKLEIKR) is framework-4.

This chain is Ig kappa chain V-V region HP R16.7, found in Mus musculus (Mouse).